Here is a 757-residue protein sequence, read N- to C-terminus: Ecdysone receptor (757 aa).

Positions 1–300 (MMKRRWSNNG…GPAPRLQEEL (300 aa)) are modulating. 2 disordered regions span residues 126-192 (NSVG…GGGG) and 235-289 (LNHH…KKIK). The segment covering 128 to 138 (VGGGGGGGGVP) has biased composition (gly residues). Residues 167–183 (NSNSNHSNSSSHHTNGH) show a composition bias toward low complexity. NR C4-type zinc fingers lie at residues 301–321 (CLVC…CEGC) and 337–361 (CKFG…LKKC). The segment at residues 301 to 373 (CLVCGDRASG…VGMRPECVVP (73 aa)) is a DNA-binding region (nuclear receptor). The region spanning 442–677 (NQLAVIYKLI…FLEEIWDVHA (236 aa)) is the NR LBD domain. The segment covering 717–734 (TSMATSSSSSLSPSAAST) has biased composition (low complexity). The interval 717-739 (TSMATSSSSSLSPSAASTPNGGA) is disordered.

The protein belongs to the nuclear hormone receptor family. NR1 subfamily.

Its subcellular location is the nucleus. Its function is as follows. Receptor for ecdysone. Binds to ecdysone response elements (ECRES). The polypeptide is Ecdysone receptor (EcR) (Lucilia cuprina (Green bottle fly)).